We begin with the raw amino-acid sequence, 450 residues long: Glucose-6-phosphate isomerase (450 aa).

Catalysis depends on Glu290, which acts as the Proton donor. Active-site residues include His311 and Lys425.

Belongs to the GPI family.

The protein resides in the cytoplasm. It catalyses the reaction alpha-D-glucose 6-phosphate = beta-D-fructose 6-phosphate. The protein operates within carbohydrate biosynthesis; gluconeogenesis. It functions in the pathway carbohydrate degradation; glycolysis; D-glyceraldehyde 3-phosphate and glycerone phosphate from D-glucose: step 2/4. Its function is as follows. Catalyzes the reversible isomerization of glucose-6-phosphate to fructose-6-phosphate. The sequence is that of Glucose-6-phosphate isomerase from Leuconostoc mesenteroides subsp. mesenteroides (strain ATCC 8293 / DSM 20343 / BCRC 11652 / CCM 1803 / JCM 6124 / NCDO 523 / NBRC 100496 / NCIMB 8023 / NCTC 12954 / NRRL B-1118 / 37Y).